A 322-amino-acid chain; its full sequence is 4-diphosphocytidyl-2-C-methyl-D-erythritol kinase (322 aa).

K18 is an active-site residue. 130 to 140 is an ATP binding site; it reads PMGAGLGGGSS. D172 is an active-site residue.

It belongs to the GHMP kinase family. IspE subfamily.

It catalyses the reaction 4-CDP-2-C-methyl-D-erythritol + ATP = 4-CDP-2-C-methyl-D-erythritol 2-phosphate + ADP + H(+). The protein operates within isoprenoid biosynthesis; isopentenyl diphosphate biosynthesis via DXP pathway; isopentenyl diphosphate from 1-deoxy-D-xylulose 5-phosphate: step 3/6. Catalyzes the phosphorylation of the position 2 hydroxy group of 4-diphosphocytidyl-2C-methyl-D-erythritol. The sequence is that of 4-diphosphocytidyl-2-C-methyl-D-erythritol kinase from Psychrobacter cryohalolentis (strain ATCC BAA-1226 / DSM 17306 / VKM B-2378 / K5).